A 267-amino-acid chain; its full sequence is Ribosomal RNA small subunit methyltransferase A (267 aa).

Positions 12, 14, 39, 60, 84, and 110 each coordinate S-adenosyl-L-methionine.

Belongs to the class I-like SAM-binding methyltransferase superfamily. rRNA adenine N(6)-methyltransferase family. RsmA subfamily.

Its subcellular location is the cytoplasm. The enzyme catalyses adenosine(1518)/adenosine(1519) in 16S rRNA + 4 S-adenosyl-L-methionine = N(6)-dimethyladenosine(1518)/N(6)-dimethyladenosine(1519) in 16S rRNA + 4 S-adenosyl-L-homocysteine + 4 H(+). In terms of biological role, specifically dimethylates two adjacent adenosines (A1518 and A1519) in the loop of a conserved hairpin near the 3'-end of 16S rRNA in the 30S particle. May play a critical role in biogenesis of 30S subunits. This Mesoplasma florum (strain ATCC 33453 / NBRC 100688 / NCTC 11704 / L1) (Acholeplasma florum) protein is Ribosomal RNA small subunit methyltransferase A.